The chain runs to 268 residues: Shikimate dehydrogenase (NADP(+)) (268 aa).

Residues 13-15 (SLS) and T60 each bind shikimate. K64 acts as the Proton acceptor in catalysis. E76 lines the NADP(+) pocket. Shikimate-binding residues include N85 and D100. Residues 124-128 (GAGGA), 148-153 (NRTMAR), and I209 contribute to the NADP(+) site. Y211 is a shikimate binding site. G232 contacts NADP(+).

Belongs to the shikimate dehydrogenase family. In terms of assembly, homodimer.

It catalyses the reaction shikimate + NADP(+) = 3-dehydroshikimate + NADPH + H(+). It functions in the pathway metabolic intermediate biosynthesis; chorismate biosynthesis; chorismate from D-erythrose 4-phosphate and phosphoenolpyruvate: step 4/7. Functionally, involved in the biosynthesis of the chorismate, which leads to the biosynthesis of aromatic amino acids. Catalyzes the reversible NADPH linked reduction of 3-dehydroshikimate (DHSA) to yield shikimate (SA). The protein is Shikimate dehydrogenase (NADP(+)) of Staphylococcus aureus (strain bovine RF122 / ET3-1).